We begin with the raw amino-acid sequence, 457 residues long: RuvB-like helicase 1 (457 aa).

73-80 is a binding site for ATP; the sequence is GGPSTGKT.

Belongs to the RuvB family. May form heterododecamers with RVB2. Component of the SWR1 chromatin remodeling complex, the INO80 chromatin remodeling complex, and of the R2TP complex.

It is found in the nucleus. It catalyses the reaction ATP + H2O = ADP + phosphate + H(+). Its function is as follows. DNA helicase which participates in several chromatin remodeling complexes, including the SWR1 and the INO80 complexes. The SWR1 complex mediates the ATP-dependent exchange of histone H2A for the H2A variant HZT1 leading to transcriptional regulation of selected genes by chromatin remodeling. The INO80 complex remodels chromatin by shifting nucleosomes and is involved in DNA repair. Also involved in pre-rRNA processing. In Kluyveromyces lactis (strain ATCC 8585 / CBS 2359 / DSM 70799 / NBRC 1267 / NRRL Y-1140 / WM37) (Yeast), this protein is RuvB-like helicase 1 (RVB1).